Reading from the N-terminus, the 543-residue chain is Lipoyl synthase, apicoplast (543 aa).

The signal sequence occupies residues Met1–Ser63. Residues Cys252, Cys257, Cys263, Cys278, Cys282, Cys285, and Ser493 each contribute to the [4Fe-4S] cluster site. Positions Trp264–Lys482 constitute a Radical SAM core domain.

Belongs to the radical SAM superfamily. Lipoyl synthase family. [4Fe-4S] cluster is required as a cofactor.

The protein localises to the plastid. It localises to the apicoplast. The catalysed reaction is [[Fe-S] cluster scaffold protein carrying a second [4Fe-4S](2+) cluster] + N(6)-octanoyl-L-lysyl-[protein] + 2 oxidized [2Fe-2S]-[ferredoxin] + 2 S-adenosyl-L-methionine + 4 H(+) = [[Fe-S] cluster scaffold protein] + N(6)-[(R)-dihydrolipoyl]-L-lysyl-[protein] + 4 Fe(3+) + 2 hydrogen sulfide + 2 5'-deoxyadenosine + 2 L-methionine + 2 reduced [2Fe-2S]-[ferredoxin]. It participates in protein modification; protein lipoylation via endogenous pathway; protein N(6)-(lipoyl)lysine from octanoyl-[acyl-carrier-protein]: step 2/2. In terms of biological role, catalyzes the radical-mediated insertion of two sulfur atoms into the C-6 and C-8 positions of the octanoyl moiety bound to the lipoyl domains of lipoate-dependent enzymes, thereby converting the octanoylated domains into lipoylated derivatives. The polypeptide is Lipoyl synthase, apicoplast (Toxoplasma gondii).